The following is a 75-amino-acid chain: Molt-inhibiting hormone (75 aa).

3 disulfides stabilise this stretch: C7–C44, C24–C40, and C27–C53. The residue at position 75 (A75) is an Alanine amide.

It belongs to the arthropod CHH/MIH/GIH/VIH hormone family.

Its subcellular location is the secreted. In terms of biological role, inhibits Y-organs where molting hormone (ecdysteroid) is secreted. A molting cycle is initiated when MIH secretion diminishes or stops. The polypeptide is Molt-inhibiting hormone (Procambarus clarkii (Red swamp crayfish)).